The sequence spans 118 residues: Large ribosomal subunit protein bL20 (118 aa).

It belongs to the bacterial ribosomal protein bL20 family.

Binds directly to 23S ribosomal RNA and is necessary for the in vitro assembly process of the 50S ribosomal subunit. It is not involved in the protein synthesizing functions of that subunit. The sequence is that of Large ribosomal subunit protein bL20 from Lactobacillus acidophilus (strain ATCC 700396 / NCK56 / N2 / NCFM).